A 306-amino-acid polypeptide reads, in one-letter code: UDP-3-O-acyl-N-acetylglucosamine deacetylase (306 aa).

Zn(2+)-binding residues include His79, His238, and Asp242. His265 serves as the catalytic Proton donor.

It belongs to the LpxC family. Zn(2+) is required as a cofactor.

The catalysed reaction is a UDP-3-O-[(3R)-3-hydroxyacyl]-N-acetyl-alpha-D-glucosamine + H2O = a UDP-3-O-[(3R)-3-hydroxyacyl]-alpha-D-glucosamine + acetate. Its pathway is glycolipid biosynthesis; lipid IV(A) biosynthesis; lipid IV(A) from (3R)-3-hydroxytetradecanoyl-[acyl-carrier-protein] and UDP-N-acetyl-alpha-D-glucosamine: step 2/6. Functionally, catalyzes the hydrolysis of UDP-3-O-myristoyl-N-acetylglucosamine to form UDP-3-O-myristoylglucosamine and acetate, the committed step in lipid A biosynthesis. The protein is UDP-3-O-acyl-N-acetylglucosamine deacetylase of Hamiltonella defensa subsp. Acyrthosiphon pisum (strain 5AT).